We begin with the raw amino-acid sequence, 308 residues long: Peroxisomal targeting signal 2 receptor (308 aa).

6 WD repeats span residues 57–88 (DVEDSLFGVRWSQNCENQVYACCGDGSLRLFD), 101–132 (EHKAEIVAIDTNTVDRRIVVTGSWDGTIKLWL), 145–176 (GSNSRILTVATHYSSPNLLGYTSSDGLCKFWD), 187–218 (EIPNQITCMNWSKSNHRMVYTADNNNLVYCYD), 231–262 (GHQLAVRSIKSSNSAHDLLATASYDMTSRIFD), and 274–306 (LHSEFVRDVDWSDFGDGSWIASVGWDESLYIWN).

The protein belongs to the WD repeat peroxin-7 family. As to quaternary structure, interacts with PEX21.

The protein resides in the cytoplasm. It localises to the cytosol. The protein localises to the peroxisome matrix. Functionally, receptor required for the peroxisomal import of proteins containing a C-terminal PTS2-type peroxisomal targeting signal, such as 3-oxoacyl-CoA thiolase. Specifically binds to cargo proteins containing a PTS2 peroxisomal targeting signal in the cytosol. Cargo protein-binding triggers interaction with PEX21 and formation of a ternary complex composed of PEX21 and PEX7 along with PTS2-containing cargo proteins, which is tranlocated into peroxisomes by passing through the PEX13-PEX14 docking complex. This chain is Peroxisomal targeting signal 2 receptor (pex7), found in Schizosaccharomyces pombe (strain 972 / ATCC 24843) (Fission yeast).